We begin with the raw amino-acid sequence, 397 residues long: Chorismate synthase (397 aa).

Residues Arg-40 and Arg-46 each coordinate NADP(+). FMN-binding positions include 129 to 131, 257 to 258, Gly-302, 317 to 321, and Arg-343; these read RAS, QA, and KPIAT.

It belongs to the chorismate synthase family. Homotetramer. It depends on FMNH2 as a cofactor.

It catalyses the reaction 5-O-(1-carboxyvinyl)-3-phosphoshikimate = chorismate + phosphate. Its pathway is metabolic intermediate biosynthesis; chorismate biosynthesis; chorismate from D-erythrose 4-phosphate and phosphoenolpyruvate: step 7/7. In terms of biological role, catalyzes the anti-1,4-elimination of the C-3 phosphate and the C-6 proR hydrogen from 5-enolpyruvylshikimate-3-phosphate (EPSP) to yield chorismate, which is the branch point compound that serves as the starting substrate for the three terminal pathways of aromatic amino acid biosynthesis. This reaction introduces a second double bond into the aromatic ring system. This is Chorismate synthase from Prosthecochloris aestuarii (strain DSM 271 / SK 413).